The chain runs to 273 residues: 4-hydroxy-tetrahydrodipicolinate reductase (273 aa).

NAD(+) is bound by residues 8 to 13, E34, 102 to 104, and 128 to 131; these read GAAGRM, GTT, and SSNM. The active-site Proton donor/acceptor is the H160. H161 serves as a coordination point for (S)-2,3,4,5-tetrahydrodipicolinate. Residue K164 is the Proton donor of the active site. 170 to 171 lines the (S)-2,3,4,5-tetrahydrodipicolinate pocket; that stretch reads GT.

The protein belongs to the DapB family.

The protein localises to the cytoplasm. The catalysed reaction is (S)-2,3,4,5-tetrahydrodipicolinate + NAD(+) + H2O = (2S,4S)-4-hydroxy-2,3,4,5-tetrahydrodipicolinate + NADH + H(+). The enzyme catalyses (S)-2,3,4,5-tetrahydrodipicolinate + NADP(+) + H2O = (2S,4S)-4-hydroxy-2,3,4,5-tetrahydrodipicolinate + NADPH + H(+). It functions in the pathway amino-acid biosynthesis; L-lysine biosynthesis via DAP pathway; (S)-tetrahydrodipicolinate from L-aspartate: step 4/4. Catalyzes the conversion of 4-hydroxy-tetrahydrodipicolinate (HTPA) to tetrahydrodipicolinate. This Methanobrevibacter smithii (strain ATCC 35061 / DSM 861 / OCM 144 / PS) protein is 4-hydroxy-tetrahydrodipicolinate reductase.